A 350-amino-acid polypeptide reads, in one-letter code: Biotin synthase (350 aa).

In terms of domain architecture, Radical SAM core spans 38–256; that stretch reads NYVQVSTLLS…IAIARIMMPQ (219 aa). Positions 53, 57, and 60 each coordinate [4Fe-4S] cluster. [2Fe-2S] cluster is bound by residues Cys97, Cys128, Cys188, and Arg260.

The protein belongs to the radical SAM superfamily. Biotin synthase family. Homodimer. The cofactor is [4Fe-4S] cluster. [2Fe-2S] cluster serves as cofactor.

The catalysed reaction is (4R,5S)-dethiobiotin + (sulfur carrier)-SH + 2 reduced [2Fe-2S]-[ferredoxin] + 2 S-adenosyl-L-methionine = (sulfur carrier)-H + biotin + 2 5'-deoxyadenosine + 2 L-methionine + 2 oxidized [2Fe-2S]-[ferredoxin]. It participates in cofactor biosynthesis; biotin biosynthesis; biotin from 7,8-diaminononanoate: step 2/2. Functionally, catalyzes the conversion of dethiobiotin (DTB) to biotin by the insertion of a sulfur atom into dethiobiotin via a radical-based mechanism. The sequence is that of Biotin synthase from Vibrio campbellii (strain ATCC BAA-1116).